We begin with the raw amino-acid sequence, 160 residues long: Anaerobic nitrite reductase HBII (160 aa).

A Globin domain is found at 8 to 157 (GFTEEQEALV…LVAAIKLEMK (150 aa)). The Homodimerization motif lies at 41 to 45 (EIAPS). Residues Ser-51, Lys-65, His-69, Lys-99, Ser-103, and His-104 each contribute to the heme b site. Residues 111-123 (DEHFEVTKFALLE) carry the Homodimerization motif.

Belongs to the plant globin family. Homodimer. Heme b serves as cofactor.

It is found in the cytoplasm. Its subcellular location is the nucleus. It catalyses the reaction Fe(III)-heme b-[protein] + nitric oxide + H2O = Fe(II)-heme b-[protein] + nitrite + 2 H(+). Phytoglobin that reduces nitrite to nitric oxide (NO) under anoxic conditions (e.g. during flooding or in waterlogged soil) and upon root nodulation. Required for general plant development and during nodulation, especially for the onset of symbiosis. Monitors nitric oxide (NO) levels during early phase of the nitrogen-fixing symbiosis and buffers oxygen in functioning nodules. May not function as an oxygen storage or transport protein. Has an unusually high affinity for O(2) through a hexacoordinate heme iron because of a very low dissociation constant. The protein is Anaerobic nitrite reductase HBII of Casuarina glauca (Swamp oak).